The chain runs to 94 residues: Putative RNA-binding protein RbpD (94 aa).

The RRM domain occupies 2-79 (TIYVGNLSYR…RQLRVNKAKP (78 aa)). Positions 73 to 94 (RVNKAKPREDDRRGSWGKKQDY) are disordered. A compositionally biased stretch (basic and acidic residues) spans 78 to 94 (KPREDDRRGSWGKKQDY).

The sequence is that of Putative RNA-binding protein RbpD (rbpD) from Nostoc sp. (strain PCC 7120 / SAG 25.82 / UTEX 2576).